The sequence spans 115 residues: Large ribosomal subunit protein P2 (115 aa).

N-acetylmethionine is present on Met1. Phosphoserine occurs at positions 17 and 19. Lys21 carries the post-translational modification N6-acetyllysine; alternate. Lys21 carries the post-translational modification N6-succinyllysine; alternate. A compositionally biased stretch (low complexity) spans 78 to 90 (GSAAPAAGSAPAA). The tract at residues 78 to 115 (GSAAPAAGSAPAAAEEKKDEKKEESEESDDDMGFGLFD) is disordered. 2 positions are modified to phosphoserine: Ser79 and Ser86. Over residues 91–101 (AEEKKDEKKEE) the composition is skewed to basic and acidic residues. Ser102 and Ser105 each carry phosphoserine.

This sequence belongs to the eukaryotic ribosomal protein P1/P2 family. In terms of assembly, heterodimer with P1 at the lateral ribosomal stalk of the large ribosomal subunit.

Plays an important role in the elongation step of protein synthesis. The protein is Large ribosomal subunit protein P2 (RPLP2) of Homo sapiens (Human).